The following is a 397-amino-acid chain: Digeranylgeranylglycerophospholipid reductase (397 aa).

FAD is bound by residues alanine 15, glutamate 34, cysteine 45, glycine 46, glycine 48, arginine 101, alanine 125, glutamate 163, aspartate 284, glycine 296, and isoleucine 297. Residues lysine 339 and valine 375 each coordinate a 2,3-bis-O-(geranylgeranyl)-sn-glycerol 1-phospholipid.

It belongs to the geranylgeranyl reductase family. DGGGPL reductase subfamily. It depends on FAD as a cofactor.

It catalyses the reaction 2,3-bis-O-(phytanyl)-sn-glycerol 1-phosphate + 8 NADP(+) = 2,3-bis-O-(geranylgeranyl)-sn-glycerol 1-phosphate + 8 NADPH + 8 H(+). It carries out the reaction 2,3-bis-O-(phytanyl)-sn-glycerol 1-phosphate + 8 NAD(+) = 2,3-bis-O-(geranylgeranyl)-sn-glycerol 1-phosphate + 8 NADH + 8 H(+). The enzyme catalyses a 2,3-bis-O-phytanyl-sn-glycerol 1-phospholipid + 8 A = a 2,3-bis-O-(geranylgeranyl)-sn-glycerol 1-phospholipid + 8 AH2. The catalysed reaction is CDP-2,3-bis-O-(geranylgeranyl)-sn-glycerol + 8 AH2 = CDP-2,3-bis-O-(phytanyl)-sn-glycerol + 8 A. It catalyses the reaction archaetidylserine + 8 AH2 = 2,3-bis-O-phytanyl-sn-glycero-3-phospho-L-serine + 8 A. It participates in membrane lipid metabolism; glycerophospholipid metabolism. Is involved in the reduction of 2,3-digeranylgeranylglycerophospholipids (unsaturated archaeols) into 2,3-diphytanylglycerophospholipids (saturated archaeols) in the biosynthesis of archaeal membrane lipids. Catalyzes the formation of archaetidic acid (2,3-di-O-phytanyl-sn-glyceryl phosphate) from 2,3-di-O-geranylgeranylglyceryl phosphate (DGGGP) via the hydrogenation of each double bond of the isoprenoid chains. Is also probably able to reduce double bonds of geranyl groups in CDP-2,3-bis-O-(geranylgeranyl)-sn-glycerol and archaetidylserine, thus acting at various stages in the biosynthesis of archaeal membrane lipids. The sequence is that of Digeranylgeranylglycerophospholipid reductase from Picrophilus torridus (strain ATCC 700027 / DSM 9790 / JCM 10055 / NBRC 100828 / KAW 2/3).